Here is an 87-residue protein sequence, read N- to C-terminus: Serine protease inhibitor Kazal-type 12 (87 aa).

The N-terminal stretch at M1–A22 is a signal peptide. In terms of domain architecture, Kazal-like spans G26–C87. 3 disulfides stabilise this stretch: C32–C68, C46–C65, and C54–C87.

Expressed in epydiymis, in the caput.

The protein resides in the secreted. Its function is as follows. Inhibits trypsin. This Mus musculus (Mouse) protein is Serine protease inhibitor Kazal-type 12 (Spink12).